Consider the following 188-residue polypeptide: Trafficking protein particle complex subunit 5 (188 aa).

Ser-10 carries the post-translational modification Phosphoserine.

It belongs to the TRAPP small subunits family. BET3 subfamily. As to quaternary structure, component of the multisubunit TRAPP (transport protein particle) complex, which includes at least TRAPPC2, TRAPPC2L, TRAPPC3, TRAPPC3L, TRAPPC4, TRAPPC5, TRAPPC8, TRAPPC9, TRAPPC10, TRAPPC11 and TRAPPC12.

The protein localises to the golgi apparatus. It is found in the cis-Golgi network. The protein resides in the endoplasmic reticulum. In terms of biological role, may play a role in vesicular transport from endoplasmic reticulum to Golgi. The chain is Trafficking protein particle complex subunit 5 (TRAPPC5) from Homo sapiens (Human).